We begin with the raw amino-acid sequence, 210 residues long: uncharacterized protein (210 aa).

This is an uncharacterized protein from Escherichia coli (strain K12).